The following is a 122-amino-acid chain: Small ribosomal subunit protein uS13 (122 aa).

Residues 93-122 (RRGLPVRGQKTKTNARTRKGPKKTMANKKK) are disordered.

The protein belongs to the universal ribosomal protein uS13 family. In terms of assembly, part of the 30S ribosomal subunit. Forms a loose heterodimer with protein S19. Forms two bridges to the 50S subunit in the 70S ribosome.

Functionally, located at the top of the head of the 30S subunit, it contacts several helices of the 16S rRNA. In the 70S ribosome it contacts the 23S rRNA (bridge B1a) and protein L5 of the 50S subunit (bridge B1b), connecting the 2 subunits; these bridges are implicated in subunit movement. Contacts the tRNAs in the A and P-sites. The polypeptide is Small ribosomal subunit protein uS13 (Clostridium botulinum (strain Alaska E43 / Type E3)).